Consider the following 148-residue polypeptide: MNRVAVIHGPNLNLLGRREPEVYGTKSLENINKEIEKRANNLKIEVDIFQSNHEGEIIDFIHDNYKALSGIIINPGGLTHYSIALRDALAAVRLPVVEVHISNIHKREDFRHRSVIASVAVGQITGLGTEGYLYALEAIVNIIKKGSY.

The active-site Proton acceptor is the Tyr23. 3 residues coordinate substrate: Asn74, His80, and Asp87. The Proton donor role is filled by His100. Substrate contacts are provided by residues 101–102 and Arg111; that span reads IS.

It belongs to the type-II 3-dehydroquinase family. In terms of assembly, homododecamer.

It carries out the reaction 3-dehydroquinate = 3-dehydroshikimate + H2O. It functions in the pathway metabolic intermediate biosynthesis; chorismate biosynthesis; chorismate from D-erythrose 4-phosphate and phosphoenolpyruvate: step 3/7. Catalyzes a trans-dehydration via an enolate intermediate. The sequence is that of 3-dehydroquinate dehydratase from Halothermothrix orenii (strain H 168 / OCM 544 / DSM 9562).